Consider the following 295-residue polypeptide: Guided entry of tail-anchored proteins factor CAMLG (295 aa).

2 disordered regions span residues 1 to 73 (MEPM…ILNP) and 127 to 148 (GVEL…RGSH). The Cytoplasmic portion of the chain corresponds to 1–188 (MEPMPSATDG…RTTEEFDSFR (188 aa)). Over residues 15–24 (ATPSGLSASQ) the composition is skewed to polar residues. Residue Ser-53 is modified to Phosphoserine. The span at 127 to 138 (GVELRQRNRGDL) shows a compositional bias: basic and acidic residues. Residues 189 to 206 (IFRLVGCALLALVVRAFV) traverse the membrane as a helical segment. Residues 207–208 (CK) lie on the Lumenal side of the membrane. Cysteines 207 and 283 form a disulfide. A helical transmembrane segment spans residues 209–227 (YLSIFAPFLTLQLAYMGLY). Over 228–268 (KYFPKGEKKVKTTVLTAALLLSGIPAEVINRSMDTYSKMGE) the chain is Cytoplasmic. A helical transmembrane segment spans residues 269-287 (VFTDLCVYFFTFIFCHEVL). The Lumenal segment spans residues 288 to 295 (EYWGPEVP).

As to quaternary structure, component of the Golgi to ER traffic (GET) complex, which is composed of GET1/WRB, CAMLG/GET2 and GET3/TRC40. Within the complex, GET1 and CAMLG form a heterotetramer which is stabilized by phosphatidylinositol binding and which binds to the GET3 homodimer. Interacts (via C-terminus) with GET1. Interacts (via N-terminus) with GET3. GET3 shows a higher affinity for CAMLG than for GET1. Interacts (via N-terminus) with TNFRSF13B/TACI (via C-terminus). In terms of tissue distribution, in the central nervous system, expressed in astrocytes, microglia and neurons (at protein level).

Its subcellular location is the endoplasmic reticulum membrane. In terms of biological role, required for the post-translational delivery of tail-anchored (TA) proteins to the endoplasmic reticulum. Together with GET1/WRB, acts as a membrane receptor for soluble GET3/TRC40, which recognizes and selectively binds the transmembrane domain of TA proteins in the cytosol. Required for the stability of GET1. Stimulates calcium signaling in T cells through its involvement in elevation of intracellular calcium. Essential for the survival of peripheral follicular B cells. The polypeptide is Guided entry of tail-anchored proteins factor CAMLG (Rattus norvegicus (Rat)).